The following is a 420-amino-acid chain: Serine--tRNA ligase (420 aa).

L-serine is bound at residue 228–230 (TAE). 259 to 261 (RSE) lines the ATP pocket. Residue glutamate 282 participates in L-serine binding. 346-349 (EISS) contributes to the ATP binding site. L-serine is bound at residue serine 382.

Belongs to the class-II aminoacyl-tRNA synthetase family. Type-1 seryl-tRNA synthetase subfamily. Homodimer. The tRNA molecule binds across the dimer.

The protein localises to the cytoplasm. It carries out the reaction tRNA(Ser) + L-serine + ATP = L-seryl-tRNA(Ser) + AMP + diphosphate + H(+). It catalyses the reaction tRNA(Sec) + L-serine + ATP = L-seryl-tRNA(Sec) + AMP + diphosphate + H(+). It participates in aminoacyl-tRNA biosynthesis; selenocysteinyl-tRNA(Sec) biosynthesis; L-seryl-tRNA(Sec) from L-serine and tRNA(Sec): step 1/1. Its function is as follows. Catalyzes the attachment of serine to tRNA(Ser). Is also able to aminoacylate tRNA(Sec) with serine, to form the misacylated tRNA L-seryl-tRNA(Sec), which will be further converted into selenocysteinyl-tRNA(Sec). The protein is Serine--tRNA ligase of Mycoplasmoides gallisepticum (strain R(low / passage 15 / clone 2)) (Mycoplasma gallisepticum).